A 613-amino-acid chain; its full sequence is Envelope glycoprotein gp95 (613 aa).

The N-terminal stretch at 1-62 is a signal peptide; sequence MEAVIKAVLT…VLCEVTGVRA (62 aa). Residues 14–36 form a disordered region; sequence GETSKKDSKKKPPATSKKDPEKT. Residues 63 to 559 are Extracellular-facing; it reads DVHLLEQPGN…EWAVHLLKGL (497 aa). 7 disulfides stabilise this stretch: Cys-87/Cys-506, Cys-121/Cys-151, Cys-191/Cys-252, Cys-265/Cys-275, Cys-360/Cys-377, Cys-417/Cys-453, and Cys-498/Cys-505. Asn-120, Asn-140, Asn-157, Asn-177, Asn-230, Asn-264, Asn-271, Asn-297, Asn-303, Asn-313, and Asn-321 each carry an N-linked (GlcNAc...) asparagine; by host glycan. The segment at 184-233 is binding to host receptor; the sequence is IPSVAGGCIGFTPYDSPAGVYGWDRREVTHILLTDPGNNPFFDKASNSSK. Positions 268 to 294 are binding to host receptor; the sequence is MRQNWSICQDVWGRGPPENWCTSTGGT. Residues Asn-388 and Asn-398 are each glycosylated (N-linked (GlcNAc...) asparagine; by host). Positions 425-445 are fusion peptide; it reads GPTARIFASILAPGVAAAQAL. Residue Asn-460 is glycosylated (N-linked (GlcNAc...) asparagine; by host). The interval 481–497 is immunosuppression; sequence LQNRAAIDFLLLAHGHG. Asn-508 carries an N-linked (GlcNAc...) asparagine; by host glycan. The helical transmembrane segment at 560-580 threads the bilayer; that stretch reads LLGLVVILLLVVCLPCLLQIV. S-palmitoyl cysteine; by host attachment occurs at residues Cys-572 and Cys-575. At 581–613 the chain is on the extracellular side; the sequence is CGNIRKMINNSISYHTEYKKLQKAYGQPESRIV. The N-linked (GlcNAc...) asparagine; by host glycan is linked to Asn-589.

This sequence belongs to the Alpharetroviruses envelope glycoprotein family. Heterodimer with the transmembrane protein. The mature envelope protein (Env) consists of a trimer of SU-TM heterodimers attached by a labile interchain disulfide bond. Interacts with the host cell entry receptor TVB-S3; this interaction allows the viral attachment. In terms of assembly, heterodimer with the surface protein. The mature envelope protein (Env) consists of a trimer of SU-TM heterodimers attached by a labile interchain disulfide bond. In terms of processing, specific enzymatic cleavages in vivo yield mature proteins. Envelope glycoproteins are synthesized as an inactive precursor that is N-glycosylated and processed likely by host cell furin or by a furin-like protease in the Golgi to yield the mature SU and TM proteins. The cleavage site between SU and TM requires the minimal sequence [KR]-X-[KR]-R. The transmembrane protein is palmitoylated. Palmitoylation is necessary for glycoprotein function and infectivity.

It localises to the virion membrane. Its subcellular location is the host cell membrane. Its function is as follows. The surface protein (SU) attaches the virus to the host cell entry receptor TVB-S3/CAR1. This interaction triggers the refolding of the transmembrane protein (TM) thereby unmasking its fusion peptide and the formation of a reactive thiolate on Cys-100 to activate its fusogenic potential. Fusion occurs at the host cell plasma membrane. The transmembrane protein (TM) acts as a class I viral fusion protein. Under the current model, the protein has at least 3 conformational states: pre-fusion native state, pre-hairpin intermediate state, and post-fusion hairpin state. During viral and target cell membrane fusion, the coiled coil regions (heptad repeats) assume a trimer-of-hairpins structure, positioning the fusion peptide in close proximity to the C-terminal region of the ectodomain. The formation of this structure appears to drive apposition and subsequent fusion of viral and target cell membranes. Membranes fusion leads to delivery of the nucleocapsid into the cytoplasm. The protein is Envelope glycoprotein gp95 (env) of Rous sarcoma virus subgroup B (strain Schmidt-Ruppin) (RSV-SR-B).